The following is a 202-amino-acid chain: Cytochrome c biogenesis ATP-binding export protein CcmA (202 aa).

An ABC transporter domain is found at 3–200; the sequence is LAAENLSGER…EGTQELKMGA (198 aa). An ATP-binding site is contributed by 35 to 42; it reads GPNGAGKS.

This sequence belongs to the ABC transporter superfamily. CcmA exporter (TC 3.A.1.107) family. As to quaternary structure, the complex is composed of two ATP-binding proteins (CcmA) and two transmembrane proteins (CcmB).

Its subcellular location is the cell inner membrane. The enzyme catalyses heme b(in) + ATP + H2O = heme b(out) + ADP + phosphate + H(+). Its function is as follows. Part of the ABC transporter complex CcmAB involved in the biogenesis of c-type cytochromes; once thought to export heme, this seems not to be the case, but its exact role is uncertain. Responsible for energy coupling to the transport system. This chain is Cytochrome c biogenesis ATP-binding export protein CcmA, found in Chelativorans sp. (strain BNC1).